Reading from the N-terminus, the 283-residue chain is NADPH-dependent 3-dehydrocapnine reductase (283 aa).

Tyrosine 153 acts as the Proton acceptor in catalysis.

Belongs to the short-chain dehydrogenases/reductases (SDR) family.

The catalysed reaction is 3-oxocapnine + NADPH + H(+) = capnine + NADP(+). Its pathway is lipid metabolism. Reductase involved in the biosynthesis of capnine, a sulfonolipid present in the outer membrane of gliding Bacteroidetes and essential for gliding motility. Catalyzes the reduction of 3-dehydrocapnine to capnine. This is NADPH-dependent 3-dehydrocapnine reductase from Ornithobacterium rhinotracheale.